The primary structure comprises 236 residues: WUSCHEL-related homeobox 4 (236 aa).

The homeobox; WUS-type DNA-binding region spans 88-152 (AGTTRWNPSA…NHKARERQKQ (65 aa)). Positions 169-188 (PATANETKEAPEKKEKDVED) are disordered. Positions 174-187 (ETKEAPEKKEKDVE) are enriched in basic and acidic residues.

The protein belongs to the WUS homeobox family.

The protein localises to the nucleus. Its function is as follows. Transcription factor which may be involved in developmental processes. The protein is WUSCHEL-related homeobox 4 (WOX4) of Oryza sativa subsp. indica (Rice).